A 771-amino-acid chain; its full sequence is Myotubularin-related protein 10 (771 aa).

Positions 217-657 (FETYSDWDRE…THIKLWKLCY (441 aa)) constitute a Myotubularin phosphatase domain. 2 positions are modified to phosphoserine: Ser-603 and Ser-745.

Belongs to the protein-tyrosine phosphatase family. Non-receptor class myotubularin subfamily.

The chain is Myotubularin-related protein 10 (Mtmr10) from Mus musculus (Mouse).